Consider the following 364-residue polypeptide: Fructose-bisphosphate aldolase B (364 aa).

2 residues coordinate substrate: Arg-56 and Lys-147. The active-site Proton acceptor is the Glu-188. The Schiff-base intermediate with dihydroxyacetone-P role is filled by Lys-230.

Belongs to the class I fructose-bisphosphate aldolase family. As to quaternary structure, homotetramer.

The protein resides in the cytoplasm. The protein localises to the cytoskeleton. Its subcellular location is the microtubule organizing center. It localises to the centrosome. It is found in the centriolar satellite. The enzyme catalyses beta-D-fructose 1,6-bisphosphate = D-glyceraldehyde 3-phosphate + dihydroxyacetone phosphate. It functions in the pathway carbohydrate degradation; glycolysis; D-glyceraldehyde 3-phosphate and glycerone phosphate from D-glucose: step 4/4. The sequence is that of Fructose-bisphosphate aldolase B (aldob) from Sparus aurata (Gilthead sea bream).